A 1241-amino-acid chain; its full sequence is ATP-dependent helicase/nuclease subunit A (1241 aa).

The UvrD-like helicase ATP-binding domain maps to 12 to 485 (SQWTDDQWKA…IDLAKNFRSR (474 aa)). 33-40 (AAAGSGKT) provides a ligand contact to ATP. The UvrD-like helicase C-terminal domain maps to 505–805 (GEIDYDADAE…RIMTIHKSKG (301 aa)).

The protein belongs to the helicase family. AddA subfamily. In terms of assembly, heterodimer of AddA and AddB/RexB. The cofactor is Mg(2+).

It carries out the reaction Couples ATP hydrolysis with the unwinding of duplex DNA by translocating in the 3'-5' direction.. The catalysed reaction is ATP + H2O = ADP + phosphate + H(+). The heterodimer acts as both an ATP-dependent DNA helicase and an ATP-dependent, dual-direction single-stranded exonuclease. Recognizes the chi site generating a DNA molecule suitable for the initiation of homologous recombination. The AddA nuclease domain is required for chi fragment generation; this subunit has the helicase and 3' -&gt; 5' nuclease activities. This Bacillus cereus (strain AH187) protein is ATP-dependent helicase/nuclease subunit A.